The sequence spans 198 residues: DnaJ homolog subfamily C member 12 (198 aa).

M1 carries the post-translational modification N-acetylmethionine. Residues 14–79 (DYYTLLGCDE…ESRARYDHWR (66 aa)) form the J domain. Residues 121 to 183 (TNTAQNKERS…CGHLHFRWSG (63 aa)) form a disordered region. A compositionally biased stretch (basic and acidic residues) spans 126–156 (NKERSEQRETKQGDPDSTPEKMMQKESESPE). A phosphoserine mark is found at S160, S166, and S182.

Interacts with HSPA8. Interacts with TPH1. Interacts with TPH2.

Its subcellular location is the cytoplasm. Its function is as follows. Probable co-chaperone that participates in the proper folding of biopterin-dependent aromatic amino acid hydroxylases, which include phenylalanine-4-hydroxylase (PAH), tyrosine 3-monooxygenase (TH) and peripheral and neuronal tryptophan hydroxylases (TPH1 and TPH2). The protein is DnaJ homolog subfamily C member 12 (Dnajc12) of Rattus norvegicus (Rat).